Consider the following 256-residue polypeptide: Probable fructose-2,6-bisphosphatase TIGAR A (256 aa).

The active-site Tele-phosphohistidine intermediate is the H11. E89 acts as the Proton donor/acceptor in catalysis. The segment at 147–170 is disordered; the sequence is HQDKVQDGGTSSADESTEAPAGLA.

Belongs to the phosphoglycerate mutase family.

It is found in the cytoplasm. The protein localises to the nucleus. Its subcellular location is the mitochondrion. The catalysed reaction is beta-D-fructose 2,6-bisphosphate + H2O = beta-D-fructose 6-phosphate + phosphate. Its function is as follows. Fructose-bisphosphatase hydrolyzing fructose-2,6-bisphosphate as well as fructose-1,6-bisphosphate. Acts as a negative regulator of glycolysis by lowering intracellular levels of fructose-2,6-bisphosphate in a p53/TP53-dependent manner, resulting in the pentose phosphate pathway (PPP) activation and NADPH production. Contributes to the generation of reduced glutathione to cause a decrease in intracellular reactive oxygen species (ROS) content, correlating with its ability to protect cells from oxidative or metabolic stress-induced cell death. May play a role in mitophagy inhibition. The chain is Probable fructose-2,6-bisphosphatase TIGAR A from Danio rerio (Zebrafish).